The primary structure comprises 261 residues: Kallikrein 1-related peptidase b8 (261 aa).

Residues 1 to 18 form the signal peptide; it reads MRFLILFLALSLGGIDAA. A propeptide spans 19–24 (activation peptide); it reads PPLQSR. A Peptidase S1 domain is found at 25 to 258; that stretch reads VVGGFNCEKN…FNSWIKDTMT (234 aa). 5 cysteine pairs are disulfide-bonded: cysteine 31–cysteine 173, cysteine 50–cysteine 66, cysteine 152–cysteine 219, cysteine 184–cysteine 198, and cysteine 209–cysteine 234. Histidine 65 acts as the Charge relay system in catalysis. Asparagine 102 carries N-linked (GlcNAc...) asparagine glycosylation. The active-site Charge relay system is the aspartate 120. Serine 213 functions as the Charge relay system in the catalytic mechanism.

Belongs to the peptidase S1 family. Kallikrein subfamily.

The enzyme catalyses Preferential cleavage of Arg-|-Xaa bonds in small molecule substrates. Highly selective action to release kallidin (lysyl-bradykinin) from kininogen involves hydrolysis of Met-|-Xaa or Leu-|-Xaa.. In terms of biological role, glandular kallikreins cleave Met-Lys and Arg-Ser bonds in kininogen to release Lys-bradykinin. This chain is Kallikrein 1-related peptidase b8 (Klk1b8), found in Mus musculus (Mouse).